Reading from the N-terminus, the 60-residue chain is Small ribosomal subunit protein eS17 (60 aa).

This sequence belongs to the eukaryotic ribosomal protein eS17 family.

This is Small ribosomal subunit protein eS17 from Methanosphaera stadtmanae (strain ATCC 43021 / DSM 3091 / JCM 11832 / MCB-3).